A 124-amino-acid polypeptide reads, in one-letter code: uncharacterized protein (124 aa).

Residues 13 to 33 (IIFMALYFVITGIVIRLIGYS) traverse the membrane as a helical segment.

It localises to the membrane. This is an uncharacterized protein from Bacillus anthracis.